A 61-amino-acid chain; its full sequence is Cytotoxin homolog 2 (61 aa).

Intrachain disulfides connect C3–C22, C15–C39, C43–C54, and C55–C60.

It belongs to the three-finger toxin family. Short-chain subfamily. Orphan group XV sub-subfamily. Expressed by the venom gland.

The protein localises to the secreted. It is found in the target cell membrane. In terms of biological role, has low cytotoxic activity. This Naja melanoleuca (Forest cobra) protein is Cytotoxin homolog 2.